An 80-amino-acid polypeptide reads, in one-letter code: Beta-toxin KAaH1 (80 aa).

The first 22 residues, 1-22 (MMKLMLFSIIVILFSLIGSIHG), serve as a signal peptide directing secretion. One can recognise an LCN-type CS-alpha/beta domain in the interval 25–80 (VPGNYPLDSSDDTYLCAPLGENPFCIKICRKHGVKYGYCYAFQCWCEYLEDKNVKI). Disulfide bonds link cysteine 40-cysteine 63, cysteine 49-cysteine 68, and cysteine 53-cysteine 70.

It belongs to the long (3 C-C) scorpion toxin superfamily. Sodium/Potassium channel inhibitor family. Expressed by the venom gland.

It localises to the secreted. Its function is as follows. Inhibits the vertebrate potassium channels Kv1.1/KCNA1 and Kv1.3/KCNA3 in vitro with an IC(50) of 5.3 nM and 50.0 nM respectively. In Androctonus australis (Sahara scorpion), this protein is Beta-toxin KAaH1.